The primary structure comprises 267 residues: Electron transfer flavoprotein subunit beta (267 aa).

The protein belongs to the ETF beta-subunit/FixA family. As to quaternary structure, heterodimer of an alpha and a beta subunit.

In terms of biological role, participates in the electron transfer process during N,N-dimethylglycine (DMG) degradation to sarcosine. The protein is Electron transfer flavoprotein subunit beta of Chromohalobacter salexigens (strain ATCC BAA-138 / DSM 3043 / CIP 106854 / NCIMB 13768 / 1H11).